A 146-amino-acid polypeptide reads, in one-letter code: Myoglobin (146 aa).

A Globin domain is found at 2–141 (GDFDMVLKFW…IIADIDATYK (140 aa)). His-60 lines the nitrite pocket. His-60 contacts O2. His-89 serves as a coordination point for heme b.

It belongs to the globin family. Monomeric.

The protein localises to the cytoplasm. It localises to the sarcoplasm. The catalysed reaction is Fe(III)-heme b-[protein] + nitric oxide + H2O = Fe(II)-heme b-[protein] + nitrite + 2 H(+). It carries out the reaction H2O2 + AH2 = A + 2 H2O. Monomeric heme protein which primary function is to store oxygen and facilitate its diffusion within muscle tissues. Reversibly binds oxygen through a pentacoordinated heme iron and enables its timely and efficient release as needed during periods of heightened demand. Depending on the oxidative conditions of tissues and cells, and in addition to its ability to bind oxygen, it also has a nitrite reductase activity whereby it regulates the production of bioactive nitric oxide. Under stress conditions, like hypoxia and anoxia, it also protects cells against reactive oxygen species thanks to its pseudoperoxidase activity. In Tetraodon nigroviridis (Spotted green pufferfish), this protein is Myoglobin (mb).